The following is a 157-amino-acid chain: uncharacterized protein (157 aa).

The HD domain occupies 33 to 134 (NLKHFLDVAR…MYRADKLSRL (102 aa)).

This is an uncharacterized protein from Clostridium beijerinckii (strain ATCC 51743 / NCIMB 8052) (Clostridium acetobutylicum).